Reading from the N-terminus, the 264-residue chain is Chanoclavine-I dehydrogenase easD (264 aa).

Positions 1-20 are cleaved as a signal peptide; it reads MASVSSKIFAITGGASGIGA. Residues Ile18, Asp66, Arg132, Tyr169, Lys173, and Thr204 each contribute to the NADP(+) site. Tyr169 acts as the Proton donor in catalysis. Lys173 functions as the Lowers pKa of active site Tyr in the catalytic mechanism.

This sequence belongs to the short-chain dehydrogenases/reductases (SDR) family. Homotetramer.

The enzyme catalyses chanoclavine-I + NAD(+) = chanoclavine-I aldehyde + NADH + H(+). It participates in alkaloid biosynthesis; ergot alkaloid biosynthesis. Chanoclavine-I dehydrogenase; part of the gene cluster that mediates the biosynthesis of fungal ergot alkaloid. DmaW catalyzes the first step of ergot alkaloid biosynthesis by condensing dimethylallyl diphosphate (DMAP) and tryptophan to form 4-dimethylallyl-L-tryptophan. The second step is catalyzed by the methyltransferase easF that methylates 4-dimethylallyl-L-tryptophan in the presence of S-adenosyl-L-methionine, resulting in the formation of 4-dimethylallyl-L-abrine. The catalase easC and the FAD-dependent oxidoreductase easE then transform 4-dimethylallyl-L-abrine to chanoclavine-I which is further oxidized by easD in the presence of NAD(+), resulting in the formation of chanoclavine-I aldehyde. Chanoclavine-I aldehyde is the precursor of ergoamides and ergopeptines in Clavicipitaceae, and clavine-type alcaloids such as fumiclavine in Trichocomaceae. However, the metabolites downstream of chanoclavine-I aldehyde in Arthrodermataceae have not been identified yet. The sequence is that of Chanoclavine-I dehydrogenase easD from Arthroderma otae (strain ATCC MYA-4605 / CBS 113480) (Microsporum canis).